Reading from the N-terminus, the 295-residue chain is 4-diphosphocytidyl-2-C-methyl-D-erythritol kinase (295 aa).

Residue Lys-22 is part of the active site. 106–116 (PAGGGFGGGSS) is an ATP binding site. Asp-148 is an active-site residue.

Belongs to the GHMP kinase family. IspE subfamily.

The catalysed reaction is 4-CDP-2-C-methyl-D-erythritol + ATP = 4-CDP-2-C-methyl-D-erythritol 2-phosphate + ADP + H(+). Its pathway is isoprenoid biosynthesis; isopentenyl diphosphate biosynthesis via DXP pathway; isopentenyl diphosphate from 1-deoxy-D-xylulose 5-phosphate: step 3/6. In terms of biological role, catalyzes the phosphorylation of the position 2 hydroxy group of 4-diphosphocytidyl-2C-methyl-D-erythritol. The protein is 4-diphosphocytidyl-2-C-methyl-D-erythritol kinase of Xanthomonas axonopodis pv. citri (strain 306).